The primary structure comprises 222 residues: 26S proteasome non-ATPase regulatory subunit 9 (222 aa).

One can recognise a PDZ domain in the interval 108–194 (QARDMAEARE…KPLNVTVIRR (87 aa)). Ser-128 is subject to Phosphoserine.

The protein belongs to the proteasome subunit p27 family. In terms of assembly, interacts with PSMC3. Part of a transient complex (modulator) containing PSMD9, PSMC6 and PSMC3 formed during the assembly of the 26S proteasome.

Its function is as follows. Acts as a chaperone during the assembly of the 26S proteasome, specifically of the base subcomplex of the PA700/19S regulatory complex (RC). During the base subcomplex assembly is part of an intermediate PSMD9:PSMC6:PSMC3 module, also known as modulator trimer complex; PSMD9 is released during the further base assembly process. The chain is 26S proteasome non-ATPase regulatory subunit 9 (Psmd9) from Mus musculus (Mouse).